A 24-amino-acid polypeptide reads, in one-letter code: GLLNGLALRLGKRALKKIIKRLCR.

Antimicrobial peptide, active against the Gram-negative bacterium E.coli K12-594 (MIC=3.12 ug/ml), the Gram-positive bacteria B.subtilis KCTC 3086 (MIC=3.12 ug/ml), S.aureus KCTC 1928 (MIC=25 ug/ml) and M.luteus KCTC 3063 (MIC=1.56 ug/ml), the antibiotic resistant bacteria methicillin-resistant S.aureus (MRSA) (MIC=25 ug/ml) and vancomycin-resistant Enterococci (VRE) (MIC=25 ug/ml), and the fungi C.albicans KCTC 7965 (MIC=50 ug/ml) and C.tropicalis KCTC 1925 (MIC=3.12 ug/ml). Has very low hemolytic activity on rat erythrocytes. The chain is Cryptonin from Cryptotympana dubia (Korean horse cicada).